A 318-amino-acid polypeptide reads, in one-letter code: Receptor homology region, transmembrane domain- and RING domain-containing protein 6 (318 aa).

The first 20 residues, 1-20 (MNGSWITILSLLVISQLASS), serve as a signal peptide directing secretion. The Lumenal segment spans residues 22–162 (VTLIGKNTFL…LIPGFGISSW (141 aa)). A disulfide bridge connects residues Cys-62 and Cys-87. The region spanning 70–143 (EKGSKFRPSY…RTSGEVLKEY (74 aa)) is the PA domain. N-linked (GlcNAc...) asparagine glycosylation is present at Asn-121. Residues 163–183 (SIMAITFVSLLVISAVLASYF) form a helical membrane-spanning segment. The Cytoplasmic portion of the chain corresponds to 184–318 (SVRRHRIRQH…DLPIVVRVYL (135 aa)). Residues 233-275 (CAICIDDYRVGEILRILPCKHKYHAVCIDSWLGRCRSFCPVCK) form an RING-type; atypical zinc finger.

The protein localises to the prevacuolar compartment membrane. Its subcellular location is the protein storage vacuole membrane. Involved in the trafficking of vacuolar proteins. May function as a sorting receptor for protein trafficking to the protein storage vacuole (PSV). The sequence is that of Receptor homology region, transmembrane domain- and RING domain-containing protein 6 (RMR6) from Arabidopsis thaliana (Mouse-ear cress).